The primary structure comprises 265 residues: Phosphonates import ATP-binding protein PhnC (265 aa).

Residues 18–262 (LVVEHLRKEY…HLKQIYGGEE (245 aa)) enclose the ABC transporter domain. ATP is bound at residue 51–58 (GPSGTGKS).

It belongs to the ABC transporter superfamily. Phosphonates importer (TC 3.A.1.9.1) family. The complex is composed of two ATP-binding proteins (PhnC), two transmembrane proteins (PhnE) and a solute-binding protein (PhnD).

Its subcellular location is the cell inner membrane. The enzyme catalyses phosphonate(out) + ATP + H2O = phosphonate(in) + ADP + phosphate + H(+). Its function is as follows. Part of the ABC transporter complex PhnCDE involved in phosphonates import. Responsible for energy coupling to the transport system. This Nitratidesulfovibrio vulgaris (strain ATCC 29579 / DSM 644 / CCUG 34227 / NCIMB 8303 / VKM B-1760 / Hildenborough) (Desulfovibrio vulgaris) protein is Phosphonates import ATP-binding protein PhnC.